The primary structure comprises 187 residues: MTKLENPVLMATIGAAQGLRGEVRVKSFTDDPTALGDYGNLHSEDGRVFEVLEVRETKNVVIVRFRGINDRSAAEALNGLELFIERDNLPDDDLDEDEFFYADLEGLEAVDGTGKSYGSVTGVFDFGAGDLLELKGPGRRPVLIPFTEWSVLEIDLEAGKLLVDPVAAGLVEDKDESLDKQFPTKRK.

Residues 95–178 (DEDEFFYADL…GLVEDKDESL (84 aa)) enclose the PRC barrel domain.

The protein belongs to the RimM family. Binds ribosomal protein uS19.

The protein localises to the cytoplasm. In terms of biological role, an accessory protein needed during the final step in the assembly of 30S ribosomal subunit, possibly for assembly of the head region. Essential for efficient processing of 16S rRNA. May be needed both before and after RbfA during the maturation of 16S rRNA. It has affinity for free ribosomal 30S subunits but not for 70S ribosomes. The sequence is that of Ribosome maturation factor RimM from Sinorhizobium fredii (strain NBRC 101917 / NGR234).